Consider the following 1005-residue polypeptide: Espin-like protein (1005 aa).

10 ANK repeats span residues 1 to 31 (MEAQ…RPDI), 35 to 64 (LGAG…LPGN), 69 to 99 (NGAT…GLQD), 103 to 132 (SGVS…AATL), 136 to 166 (EGAL…GVNQ), 170 to 200 (SGAS…DVRL), 204 to 234 (DGMS…GLTA), 238 to 267 (EGAT…PIMR), 270 to 299 (WGGT…DPFL), and 303 to 332 (DGYT…PVRV). Disordered stretches follow at residues 355–383 (EERR…VPRE) and 458–480 (ADHP…AAEQ). Basic and acidic residues predominate over residues 458–469 (ADHPPEDQDQSQ). A coiled-coil region spans residues 502–539 (EDDLVYLEKQINDLQLRRRCQEYESELGRLAAQLQALL). Disordered stretches follow at residues 611–643 (LAQG…QREI), 692–729 (PRGD…GPGL), 764–794 (LEAQ…PRLG), and 951–975 (PHAS…SQGS).

In terms of assembly, interacts with MYO3A (via C-terminus). Interacts with MYO3B (via C-terminus). As to expression, expressed in inner ear hair cells. Expressed in utricle hair bundles (at protein level). Expressed in choclea (at protein level).

It localises to the cell projection. The protein localises to the stereocilium. In terms of biological role, binds to but does not cross-link actin. Required for the formation and maintenance of inner ear hair cell stereocilia and staircase formation. Essential for normal hearing. The chain is Espin-like protein (Espnl) from Mus musculus (Mouse).